A 352-amino-acid polypeptide reads, in one-letter code: ER-derived vesicles protein ERV41 (352 aa).

At 1-23 (MAGLKTFDAFPKTEEQYKKKSTK) the chain is on the cytoplasmic side. The chain crosses the membrane as a helical span at residues 24-44 (GGLTSLLTYLFLLFIAWTEFG). Over 45–311 (EYFGGYIDQQ…FLVRLVAICS (267 aa)) the chain is Lumenal. A helical transmembrane segment spans residues 312–332 (FLVYCASWIFTLLDMALITIM). Residues 333–352 (GPKWSLRYQPDDKTKGILDR) lie on the Cytoplasmic side of the membrane. The Isoleucine-leucine motif signature appears at 349 to 350 (IL).

Belongs to the ERGIC family. As to quaternary structure, interacts with ERV46.

Its subcellular location is the endoplasmic reticulum membrane. It localises to the golgi apparatus membrane. The protein resides in the cytoplasmic vesicle. It is found in the COPII-coated vesicle membrane. Constituent of COPII-coated endoplasmic reticulum-derived transport vesicles. Required for efficient transport of a subset of secretory proteins to the Golgi. The C-terminal Ile-Leu motif is required for exit from the endoplasmic reticulum. Facilitates retrograde transport from the Golgi to the endoplasmic reticulum. This is ER-derived vesicles protein ERV41 (ERV41) from Saccharomyces cerevisiae (strain ATCC 204508 / S288c) (Baker's yeast).